Here is a 340-residue protein sequence, read N- to C-terminus: Phosphoribosylformylglycinamidine cyclo-ligase (340 aa).

The protein belongs to the AIR synthase family.

It localises to the cytoplasm. The enzyme catalyses 2-formamido-N(1)-(5-O-phospho-beta-D-ribosyl)acetamidine + ATP = 5-amino-1-(5-phospho-beta-D-ribosyl)imidazole + ADP + phosphate + H(+). It participates in purine metabolism; IMP biosynthesis via de novo pathway; 5-amino-1-(5-phospho-D-ribosyl)imidazole from N(2)-formyl-N(1)-(5-phospho-D-ribosyl)glycinamide: step 2/2. The polypeptide is Phosphoribosylformylglycinamidine cyclo-ligase (Streptococcus pyogenes serotype M12 (strain MGAS2096)).